A 129-amino-acid chain; its full sequence is Processing of GAS1 and ALP protein 2 (129 aa).

Ser-2 carries the post-translational modification N-acetylserine. Residues 23-42 traverse the membrane as a helical segment; that stretch reads HFIRLVIIVGGYLLLRNIAS. Residues 43-116 are a coiled coil; it reads RELAKKQLAA…EAKRRNQGLD (74 aa). Disordered stretches follow at residues 53–92 and 106–129; these read QVEKDKRDKEEKRSKDLIDKPDDAATAETTSFGWGKKTRR and EEAKRRNQGLDPDSDADIEELLEE. The span at 54–75 shows a compositional bias: basic and acidic residues; it reads VEKDKRDKEEKRSKDLIDKPDD. Acidic residues predominate over residues 117–129; it reads PDSDADIEELLEE. The residue at position 119 (Ser-119) is a Phosphoserine.

This sequence belongs to the PGA2 family.

It localises to the endoplasmic reticulum membrane. The protein localises to the nucleus membrane. Its function is as follows. Involved in the processing and trafficking of GAS1 and PHO8 glycosylated proteins. In Saccharomyces cerevisiae (strain ATCC 204508 / S288c) (Baker's yeast), this protein is Processing of GAS1 and ALP protein 2 (PGA2).